A 505-amino-acid chain; its full sequence is Flagellin (505 aa).

This sequence belongs to the bacterial flagellin family.

Its subcellular location is the secreted. The protein localises to the bacterial flagellum. Functionally, flagellin is the subunit protein which polymerizes to form the filaments of bacterial flagella. The protein is Flagellin (fliC) of Salmonella budapest.